The chain runs to 231 residues: Phosphatidylserine decarboxylase proenzyme (231 aa).

S200 functions as the Schiff-base intermediate with substrate; via pyruvic acid in the catalytic mechanism. S200 bears the Pyruvic acid (Ser); by autocatalysis mark.

Belongs to the phosphatidylserine decarboxylase family. PSD-A subfamily. As to quaternary structure, heterodimer of a large membrane-associated beta subunit and a small pyruvoyl-containing alpha subunit. Pyruvate serves as cofactor. Post-translationally, is synthesized initially as an inactive proenzyme. Formation of the active enzyme involves a self-maturation process in which the active site pyruvoyl group is generated from an internal serine residue via an autocatalytic post-translational modification. Two non-identical subunits are generated from the proenzyme in this reaction, and the pyruvate is formed at the N-terminus of the alpha chain, which is derived from the carboxyl end of the proenzyme. The post-translation cleavage follows an unusual pathway, termed non-hydrolytic serinolysis, in which the side chain hydroxyl group of the serine supplies its oxygen atom to form the C-terminus of the beta chain, while the remainder of the serine residue undergoes an oxidative deamination to produce ammonia and the pyruvoyl prosthetic group on the alpha chain.

The protein resides in the cell membrane. It catalyses the reaction a 1,2-diacyl-sn-glycero-3-phospho-L-serine + H(+) = a 1,2-diacyl-sn-glycero-3-phosphoethanolamine + CO2. The protein operates within phospholipid metabolism; phosphatidylethanolamine biosynthesis; phosphatidylethanolamine from CDP-diacylglycerol: step 2/2. In terms of biological role, catalyzes the formation of phosphatidylethanolamine (PtdEtn) from phosphatidylserine (PtdSer). In Mycobacterium tuberculosis (strain ATCC 25177 / H37Ra), this protein is Phosphatidylserine decarboxylase proenzyme.